The chain runs to 352 residues: 4-hydroxy-2-oxovalerate aldolase (352 aa).

The Pyruvate carboxyltransferase domain occupies 13–265 (VRLTDTSLRD…KTGIDFFDIA (253 aa)). 21–22 (RD) contacts substrate. Asp-22 contributes to the Mn(2+) binding site. His-25 acts as the Proton acceptor in catalysis. Substrate is bound by residues Ser-175 and His-204. Positions 204 and 206 each coordinate Mn(2+). Tyr-295 is a substrate binding site.

This sequence belongs to the 4-hydroxy-2-oxovalerate aldolase family.

The catalysed reaction is (S)-4-hydroxy-2-oxopentanoate = acetaldehyde + pyruvate. This Mycobacterium avium (strain 104) protein is 4-hydroxy-2-oxovalerate aldolase.